We begin with the raw amino-acid sequence, 284 residues long: Bifunctional protein FolD (284 aa).

NADP(+) is bound by residues 165–167 and serine 190; that span reads GRS.

The protein belongs to the tetrahydrofolate dehydrogenase/cyclohydrolase family. Homodimer.

The catalysed reaction is (6R)-5,10-methylene-5,6,7,8-tetrahydrofolate + NADP(+) = (6R)-5,10-methenyltetrahydrofolate + NADPH. It carries out the reaction (6R)-5,10-methenyltetrahydrofolate + H2O = (6R)-10-formyltetrahydrofolate + H(+). The protein operates within one-carbon metabolism; tetrahydrofolate interconversion. In terms of biological role, catalyzes the oxidation of 5,10-methylenetetrahydrofolate to 5,10-methenyltetrahydrofolate and then the hydrolysis of 5,10-methenyltetrahydrofolate to 10-formyltetrahydrofolate. The polypeptide is Bifunctional protein FolD (Streptococcus pyogenes serotype M2 (strain MGAS10270)).